Reading from the N-terminus, the 110-residue chain is Integration host factor subunit alpha (110 aa).

Belongs to the bacterial histone-like protein family. As to quaternary structure, heterodimer of an alpha and a beta chain.

This protein is one of the two subunits of integration host factor, a specific DNA-binding protein that functions in genetic recombination as well as in transcriptional and translational control. The protein is Integration host factor subunit alpha of Delftia acidovorans (strain DSM 14801 / SPH-1).